The primary structure comprises 118 residues: Protein BEX4 (118 aa).

Positions 14-50 are disordered; that stretch reads VEKDKKDKKGGKASKQSEEEPHHLEEVENKKPGGNVR. Residues 28-44 are compositionally biased toward basic and acidic residues; the sequence is KQSEEEPHHLEEVENKK. Residues 30–88 are interaction with SIRT2; that stretch reads SEEEPHHLEEVENKKPGGNVRRKVRRLVPNFLWAIPNRHVDRNEGGEDVGRFVVQGTEV. The interaction with alpha-tubulin stretch occupies residues 30 to 118; it reads SEEEPHHLEE…DNHYDFCLIP (89 aa). Residue C115 participates in Zn(2+) binding.

The protein belongs to the BEX family. As to quaternary structure, interacts with alpha-tubulin. Interacts with SIRT2. Post-translationally, ubiquitinated and degraded by the proteasome. In terms of tissue distribution, expressed in both Sertoli and germ cells as well as interstitial area of the testis (at protein level).

The protein resides in the cytoplasm. It localises to the cytoskeleton. The protein localises to the spindle pole. Its subcellular location is the nucleus. Functionally, may play a role in microtubule deacetylation by negatively regulating the SIRT2 deacetylase activity toward alpha-tubulin and thereby participate in the control of cell cycle progression and genomic stability. In absence of reductive stress, acts as a pseudosubstrate for the CRL2(FEM1B) complex: associates with FEM1B via zinc, thereby preventing association between FEM1B and its substrates. This chain is Protein BEX4, found in Mus musculus (Mouse).